We begin with the raw amino-acid sequence, 312 residues long: Ribosomal RNA small subunit methyltransferase H (312 aa).

S-adenosyl-L-methionine-binding positions include 34-36 (GGH), D54, F81, D102, and Q109.

The protein belongs to the methyltransferase superfamily. RsmH family.

The protein localises to the cytoplasm. It carries out the reaction cytidine(1402) in 16S rRNA + S-adenosyl-L-methionine = N(4)-methylcytidine(1402) in 16S rRNA + S-adenosyl-L-homocysteine + H(+). Specifically methylates the N4 position of cytidine in position 1402 (C1402) of 16S rRNA. In Geotalea uraniireducens (strain Rf4) (Geobacter uraniireducens), this protein is Ribosomal RNA small subunit methyltransferase H.